The chain runs to 307 residues: Aspartate carbamoyltransferase catalytic subunit (307 aa).

Residues Arg54 and Thr55 each coordinate carbamoyl phosphate. Position 83 (Lys83) interacts with L-aspartate. Carbamoyl phosphate contacts are provided by Arg104, His132, and Gln135. L-aspartate contacts are provided by Arg165 and Arg228. Carbamoyl phosphate-binding residues include Leu267 and Pro268.

This sequence belongs to the aspartate/ornithine carbamoyltransferase superfamily. ATCase family. As to quaternary structure, heterododecamer (2C3:3R2) of six catalytic PyrB chains organized as two trimers (C3), and six regulatory PyrI chains organized as three dimers (R2).

It carries out the reaction carbamoyl phosphate + L-aspartate = N-carbamoyl-L-aspartate + phosphate + H(+). Its pathway is pyrimidine metabolism; UMP biosynthesis via de novo pathway; (S)-dihydroorotate from bicarbonate: step 2/3. Functionally, catalyzes the condensation of carbamoyl phosphate and aspartate to form carbamoyl aspartate and inorganic phosphate, the committed step in the de novo pyrimidine nucleotide biosynthesis pathway. In Clostridium botulinum (strain Loch Maree / Type A3), this protein is Aspartate carbamoyltransferase catalytic subunit.